We begin with the raw amino-acid sequence, 80 residues long: UPF0270 protein VFMJ11_0205 (80 aa).

This sequence belongs to the UPF0270 family.

In Aliivibrio fischeri (strain MJ11) (Vibrio fischeri), this protein is UPF0270 protein VFMJ11_0205.